We begin with the raw amino-acid sequence, 522 residues long: Putative aminopeptidase W07G4.4 (522 aa).

Zn(2+) contacts are provided by lysine 271 and aspartate 276. Residue lysine 283 is part of the active site. Residues aspartate 294, aspartate 354, and glutamate 356 each coordinate Zn(2+). Arginine 358 is an active-site residue.

It belongs to the peptidase M17 family. Requires Zn(2+) as cofactor.

This Caenorhabditis elegans protein is Putative aminopeptidase W07G4.4 (lap-2).